Consider the following 461-residue polypeptide: MKVTQEKLPRSQMGLNVEVEGEKSKQAYEKLVRDTMRTARIPGFRPGKAPRQLVLQFYGKERLRAQALENLIDSSLKEAIEQESIASLGNLQLRDSFEELLGRYQPGEPLSFKAAVDVQPEVQLGTYTGLTVRYSEVPYEAKQVDDQLEQYREQRAVLVPVEGRAAEVGDTAVIDFAGTKAADGNEIVGGKATDFEVELLPGRLIAGFTEGIIGMQIGESTELALRFPDDYPQQELAGVDAKFAVSLKDLKIKELPVLDDDFAGDISEFETLEALRAFLEQQQQEQAAEKTRANRDAAIIKALVAETTVDLPETLVNREVQFLAEQSFRNLQQQGIDPSRIFTEENMPRVRETLRVDAENRLKRTLALAQVARAENIVVEEEQVAARIVELRSELEEEVSEQALAEFAREEMLTEKILEWLAEHSTIELTLPGEAIEPGSGEDAPPEVAAGATEPEAQPNS.

Positions 169-256 (GDTAVIDFAG…LKDLKIKELP (88 aa)) constitute a PPIase FKBP-type domain. Positions 432–461 (PGEAIEPGSGEDAPPEVAAGATEPEAQPNS) are disordered.

The protein belongs to the FKBP-type PPIase family. Tig subfamily.

The protein resides in the cytoplasm. The enzyme catalyses [protein]-peptidylproline (omega=180) = [protein]-peptidylproline (omega=0). In terms of biological role, involved in protein export. Acts as a chaperone by maintaining the newly synthesized protein in an open conformation. Functions as a peptidyl-prolyl cis-trans isomerase. This Gloeobacter violaceus (strain ATCC 29082 / PCC 7421) protein is Trigger factor.